Reading from the N-terminus, the 579-residue chain is Laccase-4 (579 aa).

The N-terminal stretch at Met-1–Gly-28 is a signal peptide. 2 Plastocyanin-like domains span residues Asn-36 to Gly-152 and Lys-162 to Pro-316. N-linked (GlcNAc...) asparagine glycans are attached at residues Asn-41 and Asn-82. Residues His-86 and His-88 each contribute to the Cu cation site. A glycan (N-linked (GlcNAc...) asparagine) is linked at Asn-118. Residues His-131 and His-133 each coordinate Cu cation. Residues Asn-191, Asn-207, Asn-243, Asn-304, Asn-340, Asn-347, Asn-386, Asn-393, Asn-403, Asn-439, Asn-446, and Asn-462 are each glycosylated (N-linked (GlcNAc...) asparagine). The Plastocyanin-like 3 domain maps to Asp-429–Ser-563. Cu cation contacts are provided by His-480, His-483, His-485, His-542, Cys-543, His-544, and His-548.

Belongs to the multicopper oxidase family. Cu cation serves as cofactor.

It localises to the secreted. The protein resides in the extracellular space. Its subcellular location is the apoplast. It catalyses the reaction 4 hydroquinone + O2 = 4 benzosemiquinone + 2 H2O. Its function is as follows. Lignin degradation and detoxification of lignin-derived products. The protein is Laccase-4 (LAC4) of Oryza sativa subsp. japonica (Rice).